The chain runs to 50 residues: Large ribosomal subunit protein bL32c (50 aa).

It belongs to the bacterial ribosomal protein bL32 family.

It localises to the plastid. This is Large ribosomal subunit protein bL32c (rpl32) from Euglena longa (Euglenophycean alga).